The chain runs to 217 residues: Phosphatidylserine decarboxylase proenzyme (217 aa).

The active-site Schiff-base intermediate with substrate; via pyruvic acid is serine 183. Serine 183 bears the Pyruvic acid (Ser); by autocatalysis mark.

Belongs to the phosphatidylserine decarboxylase family. PSD-A subfamily. As to quaternary structure, heterodimer of a large membrane-associated beta subunit and a small pyruvoyl-containing alpha subunit. The cofactor is pyruvate. Is synthesized initially as an inactive proenzyme. Formation of the active enzyme involves a self-maturation process in which the active site pyruvoyl group is generated from an internal serine residue via an autocatalytic post-translational modification. Two non-identical subunits are generated from the proenzyme in this reaction, and the pyruvate is formed at the N-terminus of the alpha chain, which is derived from the carboxyl end of the proenzyme. The post-translation cleavage follows an unusual pathway, termed non-hydrolytic serinolysis, in which the side chain hydroxyl group of the serine supplies its oxygen atom to form the C-terminus of the beta chain, while the remainder of the serine residue undergoes an oxidative deamination to produce ammonia and the pyruvoyl prosthetic group on the alpha chain.

The protein resides in the cell membrane. It catalyses the reaction a 1,2-diacyl-sn-glycero-3-phospho-L-serine + H(+) = a 1,2-diacyl-sn-glycero-3-phosphoethanolamine + CO2. The protein operates within phospholipid metabolism; phosphatidylethanolamine biosynthesis; phosphatidylethanolamine from CDP-diacylglycerol: step 2/2. In terms of biological role, catalyzes the formation of phosphatidylethanolamine (PtdEtn) from phosphatidylserine (PtdSer). The chain is Phosphatidylserine decarboxylase proenzyme from Cupriavidus metallidurans (strain ATCC 43123 / DSM 2839 / NBRC 102507 / CH34) (Ralstonia metallidurans).